The primary structure comprises 167 residues: Leptin (167 aa).

Residues 1–21 form the signal peptide; that stretch reads MLCGPLCRFLWLWPYLSYVEA. An intrachain disulfide couples Cys-117 to Cys-167.

The protein belongs to the leptin family.

Its subcellular location is the secreted. Its function is as follows. Key player in the regulation of energy balance and body weight control. Once released into the circulation, has central and peripheral effects by binding LEPR, found in many tissues, which results in the activation of several major signaling pathways. In the hypothalamus, acts as an appetite-regulating factor that induces a decrease in food intake and an increase in energy consumption by inducing anorexinogenic factors and suppressing orexigenic neuropeptides, also regulates bone mass and secretion of hypothalamo-pituitary-adrenal hormones. In the periphery, increases basal metabolism, influences reproductive function, regulates pancreatic beta-cell function and insulin secretion, is pro-angiogenic for endothelial cell and affects innate and adaptive immunity. In the arcuate nucleus of the hypothalamus, activates by depolarization POMC neurons inducing FOS and SOCS3 expression to release anorexigenic peptides and inhibits by hyperpolarization NPY neurons inducing SOCS3 with a consequent reduction on release of orexigenic peptides. In addition to its known satiety inducing effect, has a modulatory role in nutrient absorption. In the intestine, reduces glucose absorption by enterocytes by activating PKC and leading to a sequential activation of p38, PI3K and ERK signaling pathways which exerts an inhibitory effect on glucose absorption. Acts as a growth factor on certain tissues, through the activation of different signaling pathways increases expression of genes involved in cell cycle regulation such as CCND1, via JAK2-STAT3 pathway, or VEGFA, via MAPK1/3 and PI3K-AKT1 pathways. May also play an apoptotic role via JAK2-STAT3 pathway and up-regulation of BIRC5 expression. Pro-angiogenic, has mitogenic activity on vascular endothelial cells and plays a role in matrix remodeling by regulating the expression of matrix metalloproteinases (MMPs) and tissue inhibitors of metalloproteinases (TIMPs). In innate immunity, modulates the activity and function of neutrophils by increasing chemotaxis and the secretion of oxygen radicals. Increases phagocytosis by macrophages and enhances secretion of pro-inflammatory mediators. Increases cytotoxic ability of NK cells. Plays a pro-inflammatory role, in synergy with IL1B, by inducing NOS2 which promotes the production of IL6, IL8 and Prostaglandin E2, through a signaling pathway that involves JAK2, PI3K, MAP2K1/MEK1 and MAPK14/p38. In adaptive immunity, promotes the switch of memory T-cells towards T helper-1 cell immune responses. Increases CD4(+)CD25(-) T-cell proliferation and reduces autophagy during TCR (T-cell receptor) stimulation, through MTOR signaling pathway activation and BCL2 up-regulation. The sequence is that of Leptin (LEP) from Felis catus (Cat).